Here is a 282-residue protein sequence, read N- to C-terminus: S-formylglutathione hydrolase (282 aa).

At A2 the chain carries N-acetylalanine. At K4 the chain carries N6-succinyllysine. Residues S149, D226, and H260 each act as charge relay system in the active site.

The protein belongs to the esterase D family. In terms of assembly, homodimer.

It is found in the cytoplasm. It localises to the cytoplasmic vesicle. It carries out the reaction S-formylglutathione + H2O = formate + glutathione + H(+). Functionally, serine hydrolase involved in the detoxification of formaldehyde. The protein is S-formylglutathione hydrolase (ESD) of Bos taurus (Bovine).